The following is a 541-amino-acid chain: Glucose-6-phosphate isomerase (541 aa).

The active-site Proton donor is Glu-347. Residues His-378 and Lys-506 contribute to the active site.

The protein belongs to the GPI family.

The protein resides in the cytoplasm. The catalysed reaction is alpha-D-glucose 6-phosphate = beta-D-fructose 6-phosphate. It participates in carbohydrate biosynthesis; gluconeogenesis. It functions in the pathway carbohydrate degradation; glycolysis; D-glyceraldehyde 3-phosphate and glycerone phosphate from D-glucose: step 2/4. In terms of biological role, catalyzes the reversible isomerization of glucose-6-phosphate to fructose-6-phosphate. This chain is Glucose-6-phosphate isomerase, found in Francisella tularensis subsp. holarctica (strain OSU18).